The following is a 156-amino-acid chain: Interleukin-36 receptor antagonist protein (156 aa).

C9 and C155 are oxidised to a cystine.

Belongs to the IL-1 family. Interacts with cargo receptor TMED10; the interaction mediates the translocation from the cytoplasm into the ERGIC (endoplasmic reticulum-Golgi intermediate compartment) and thereby secretion. Post-translationally, removal of N-terminal methionine is necessary for full antagonistic activity. In terms of tissue distribution, highly abundant in embryonic tissue and tissues containing epithelial cells.

The protein resides in the cytoplasm. Its subcellular location is the secreted. Its function is as follows. Inhibits the activity of interleukin-36 (IL36A,IL36B and IL36G) by binding to receptor IL1RL2/IL-36R and preventing its association with the coreceptor IL1RAP for signaling. Part of the IL-36 signaling system that is thought to be present in epithelial barriers and to take part in local inflammatory response; similar to the IL-1 system with which it shares the coreceptor. Proposed to play a role in skin inflammation. May be involved in the innate immune response to fungal pathogens. May activate an anti-inflammatory signaling pathway by recruiting SIGIRR. The sequence is that of Interleukin-36 receptor antagonist protein from Mus musculus (Mouse).